The sequence spans 349 residues: Terpene cyclase rstn5 (349 aa).

The next 5 membrane-spanning stretches (helical) occupy residues 4–24, 81–101, 116–136, 158–178, and 181–201; these read LTPL…WGVF, FMVQ…TEGA, GLFS…FWFV, VVPS…FDPF, and GLDL…CISL. N-linked (GlcNAc...) asparagine glycosylation occurs at asparagine 222. 3 helical membrane-spanning segments follow: residues 228–248, 271–291, and 309–329; these read VAVG…GLTG, LVLL…LLLA, and TLAV…AWAL.

Belongs to the membrane-bound ascI terpene cyclase family.

It localises to the membrane. The protein operates within antifungal biosynthesis. Cyclase; part of the gene cluster that mediates the biosynthesis of the tetrahydropyranyl antifungal agent restricticin that acts as an inhibitor of CYP51 and blocks the ergosterol biosynthesis. The highly reducing polyketide synthase rstn3, the short chain dehydrogenase rstn4, the cyclase rstn5, the FAD-dependent monooxygenase rstn6 and the enoylreductase rstn7 are required to generate the first stable intermediate desmethylrestrictinol. Rstn3 with rstn7 biosynthesize the first polyketide chain intermediate that is reduced by rstn4, followed by epoxidation by rstn6 before 6-endo cyclization via epoxide opening by rstn5 leads to desmethylrestrictinol. The methyltransferase rstn1 then catalyzes the C4 O-methylation of desmethylrestrictinol to produce restrictinol, and the nonribosomal peptide synthetase rstn8 catalyzes the C3 esterification of restrictinol with glycine that leads to restricticin. The polypeptide is Terpene cyclase rstn5 (Aspergillus nomiae NRRL (strain ATCC 15546 / NRRL 13137 / CBS 260.88 / M93)).